The sequence spans 216 residues: U1 small nuclear ribonucleoprotein C (216 aa).

The segment at 4 to 36 (FFCDYCDVYLTHDSMSVRKAHNSGRNHLRNVVD) adopts a Matrin-type zinc-finger fold. 2 disordered regions span residues 70-89 (PQNQPGGVPPGLGFPPPGAG) and 125-216 (PGGI…ADKR). 2 stretches are compositionally biased toward pro residues: residues 140 to 149 (PPMPPFPGMP) and 157 to 204 (GVPP…PPFG).

It belongs to the U1 small nuclear ribonucleoprotein C family. As to quaternary structure, U1 snRNP is composed of the 7 core Sm proteins B/B', D1, D2, D3, E, F and G that assemble in a heptameric protein ring on the Sm site of the small nuclear RNA to form the core snRNP, and at least 3 U1 snRNP-specific proteins U1-70K, U1-A and U1-C. U1-C interacts with U1 snRNA and the 5' splice-site region of the pre-mRNA.

It localises to the nucleus. Its function is as follows. Component of the spliceosomal U1 snRNP, which is essential for recognition of the pre-mRNA 5' splice-site and the subsequent assembly of the spliceosome. U1-C is directly involved in initial 5' splice-site recognition for both constitutive and regulated alternative splicing. The interaction with the 5' splice-site seems to precede base-pairing between the pre-mRNA and the U1 snRNA. Stimulates commitment or early (E) complex formation by stabilizing the base pairing of the 5' end of the U1 snRNA and the 5' splice-site region. The sequence is that of U1 small nuclear ribonucleoprotein C from Neurospora crassa (strain ATCC 24698 / 74-OR23-1A / CBS 708.71 / DSM 1257 / FGSC 987).